A 160-amino-acid chain; its full sequence is Transcription antitermination protein NusB (160 aa).

Belongs to the NusB family.

In terms of biological role, involved in transcription antitermination. Required for transcription of ribosomal RNA (rRNA) genes. Binds specifically to the boxA antiterminator sequence of the ribosomal RNA (rrn) operons. In Rhizobium rhizogenes (strain K84 / ATCC BAA-868) (Agrobacterium radiobacter), this protein is Transcription antitermination protein NusB.